The following is a 121-amino-acid chain: Small ribosomal subunit protein uS13 (121 aa).

Residues 96 to 121 (PVRGQNTKNNARTRKGKAVAIAGKKK) form a disordered region. Over residues 106–121 (ARTRKGKAVAIAGKKK) the composition is skewed to basic residues.

The protein belongs to the universal ribosomal protein uS13 family. Part of the 30S ribosomal subunit. Forms a loose heterodimer with protein S19. Forms two bridges to the 50S subunit in the 70S ribosome.

Located at the top of the head of the 30S subunit, it contacts several helices of the 16S rRNA. In the 70S ribosome it contacts the 23S rRNA (bridge B1a) and protein L5 of the 50S subunit (bridge B1b), connecting the 2 subunits; these bridges are implicated in subunit movement. Contacts the tRNAs in the A and P-sites. The chain is Small ribosomal subunit protein uS13 from Streptococcus pyogenes serotype M3 (strain SSI-1).